The primary structure comprises 307 residues: 4-hydroxythreonine-4-phosphate dehydrogenase (307 aa).

Positions 126 and 127 each coordinate substrate. Residues His-156, His-195, and His-251 each contribute to the a divalent metal cation site. The substrate site is built by Lys-259, Asn-268, and Arg-277.

It belongs to the PdxA family. As to quaternary structure, homodimer. Zn(2+) serves as cofactor. It depends on Mg(2+) as a cofactor. The cofactor is Co(2+).

The protein localises to the cytoplasm. It catalyses the reaction 4-(phosphooxy)-L-threonine + NAD(+) = 3-amino-2-oxopropyl phosphate + CO2 + NADH. The protein operates within cofactor biosynthesis; pyridoxine 5'-phosphate biosynthesis; pyridoxine 5'-phosphate from D-erythrose 4-phosphate: step 4/5. Its function is as follows. Catalyzes the NAD(P)-dependent oxidation of 4-(phosphooxy)-L-threonine (HTP) into 2-amino-3-oxo-4-(phosphooxy)butyric acid which spontaneously decarboxylates to form 3-amino-2-oxopropyl phosphate (AHAP). The polypeptide is 4-hydroxythreonine-4-phosphate dehydrogenase (Helicobacter pylori (strain P12)).